We begin with the raw amino-acid sequence, 181 residues long: Large ribosomal subunit protein uL5 (181 aa).

Belongs to the universal ribosomal protein uL5 family. As to quaternary structure, part of the 50S ribosomal subunit; part of the 5S rRNA/L5/L18/L25 subcomplex. Contacts the 5S rRNA and the P site tRNA. Forms a bridge to the 30S subunit in the 70S ribosome.

In terms of biological role, this is one of the proteins that bind and probably mediate the attachment of the 5S RNA into the large ribosomal subunit, where it forms part of the central protuberance. In the 70S ribosome it contacts protein S13 of the 30S subunit (bridge B1b), connecting the 2 subunits; this bridge is implicated in subunit movement. Contacts the P site tRNA; the 5S rRNA and some of its associated proteins might help stabilize positioning of ribosome-bound tRNAs. This chain is Large ribosomal subunit protein uL5, found in Helicobacter acinonychis (strain Sheeba).